We begin with the raw amino-acid sequence, 314 residues long: PDCD10 and GCKIII kinases-associated protein 1 (314 aa).

Ser30 is subject to Phosphoserine. The interval 36-142 (DDTDKLKGKW…TQPFLEGGGT (107 aa)) is disordered. Thr106 carries the post-translational modification Phosphothreonine. Residues 107 to 116 (PQPTGNSSPT) show a composition bias toward polar residues. Residues Ser238 and Ser241 each carry the phosphoserine modification. Residues 267–291 (VDSGNRQEDTHGSDGDGDGEIVDED) are disordered. Over residues 271 to 280 (NRQEDTHGSD) the composition is skewed to basic and acidic residues. Residues 281–291 (GDGDGEIVDED) show a composition bias toward acidic residues.

In terms of assembly, interacts with KEAP1; this interaction prevents the ubiquitination of KEAP1 by TRIM25, thus protecting KEAP1 from degradation. Found in association with PDCD10 and members of the STE20 kinases, such as STK24, STK25 and STK26.

Its subcellular location is the cell membrane. Its function is as follows. Acts as a tumor suppressor. Acts as a tumor suppressor for colorectal cancer cell proliferation by targeting KEAP1/USP17/ELK1/CDK6 axis. In Homo sapiens (Human), this protein is PDCD10 and GCKIII kinases-associated protein 1.